The chain runs to 832 residues: WD repeat-containing protein 75 (832 aa).

WD repeat units follow at residues 4–43 (KTDI…KVYS), 47–86 (EEWL…KLWD), 90–134 (GILI…QLVA), 148–187 (KELS…YFFR), 196–233 (LKAT…RLWR), 239–278 (KEYT…VQWQ), 281–320 (DMSK…SIIE), 326–364 (SGLI…QFYS), 378–425 (QQEY…KLWA), 432–474 (SFVL…KAWC), 485–523 (YWSC…TLWS), 527–567 (WELL…CCWN), and 572–609 (ALEW…FVFK). 2 disordered regions span residues 704-723 (QHKL…HTQG) and 759-811 (VREE…AQER). The segment covering 764–785 (DSSEQEMDSEKEEEESEEEMEA) has biased composition (acidic residues). Residues 799–811 (DEQKPKLSKAQER) show a composition bias toward basic and acidic residues.

As to quaternary structure, component of the proposed t-UTP subcomplex of the ribosomal small subunit (SSU) processome. SSU processome is composed of more than 70 proteins and the RNA chaperone small nucleolar RNA (snoRNA) U3.

It is found in the nucleus. The protein localises to the nucleolus. Its function is as follows. Ribosome biogenesis factor. Part of the small subunit (SSU) processome, first precursor of the small eukaryotic ribosomal subunit. During the assembly of the SSU processome in the nucleolus, many ribosome biogenesis factors, an RNA chaperone and ribosomal proteins associate with the nascent pre-rRNA and work in concert to generate RNA folding, modifications, rearrangements and cleavage as well as targeted degradation of pre-ribosomal RNA by the RNA exosome. Involved in nucleolar processing of pre-18S ribosomal RNA. Required for optimal pre-ribosomal RNA transcription by RNA polymerase I. This Danio rerio (Zebrafish) protein is WD repeat-containing protein 75 (wdr75).